The following is a 132-amino-acid chain: Protein NrdI (132 aa).

Belongs to the NrdI family.

In terms of biological role, probably involved in ribonucleotide reductase function. The sequence is that of Protein NrdI from Staphylococcus aureus (strain Mu3 / ATCC 700698).